The primary structure comprises 579 residues: Aspartate--tRNA(Asp/Asn) ligase (579 aa).

L-aspartate is bound at residue glutamate 171. The aspartate stretch occupies residues 195 to 198 (QLFK). L-aspartate is bound at residue arginine 217. ATP is bound by residues 217 to 219 (RDE) and glutamine 226. Position 444 (histidine 444) interacts with L-aspartate. Residue glutamate 475 coordinates ATP. Arginine 482 provides a ligand contact to L-aspartate. Residue 527-530 (GLDR) participates in ATP binding.

This sequence belongs to the class-II aminoacyl-tRNA synthetase family. Type 1 subfamily. As to quaternary structure, homodimer.

It is found in the cytoplasm. It catalyses the reaction tRNA(Asx) + L-aspartate + ATP = L-aspartyl-tRNA(Asx) + AMP + diphosphate. Functionally, aspartyl-tRNA synthetase with relaxed tRNA specificity since it is able to aspartylate not only its cognate tRNA(Asp) but also tRNA(Asn). Reaction proceeds in two steps: L-aspartate is first activated by ATP to form Asp-AMP and then transferred to the acceptor end of tRNA(Asp/Asn). The sequence is that of Aspartate--tRNA(Asp/Asn) ligase from Thermotoga neapolitana (strain ATCC 49049 / DSM 4359 / NBRC 107923 / NS-E).